The chain runs to 322 residues: Delta-aminolevulinic acid dehydratase (322 aa).

Cysteine 120, cysteine 122, and cysteine 130 together coordinate Zn(2+). Lysine 195 functions as the Schiff-base intermediate with substrate in the catalytic mechanism. Arginine 205 and arginine 217 together coordinate 5-aminolevulinate. Residue glutamate 233 coordinates Mg(2+). Lysine 248 serves as the catalytic Schiff-base intermediate with substrate. Positions 274 and 312 each coordinate 5-aminolevulinate.

The protein belongs to the ALAD family. In terms of assembly, homooctamer. Zn(2+) is required as a cofactor.

The catalysed reaction is 2 5-aminolevulinate = porphobilinogen + 2 H2O + H(+). Its pathway is porphyrin-containing compound metabolism; protoporphyrin-IX biosynthesis; coproporphyrinogen-III from 5-aminolevulinate: step 1/4. Functionally, catalyzes an early step in the biosynthesis of tetrapyrroles. Binds two molecules of 5-aminolevulinate per subunit, each at a distinct site, and catalyzes their condensation to form porphobilinogen. In Archaeoglobus fulgidus (strain ATCC 49558 / DSM 4304 / JCM 9628 / NBRC 100126 / VC-16), this protein is Delta-aminolevulinic acid dehydratase (hemB).